We begin with the raw amino-acid sequence, 245 residues long: Uridylate kinase (245 aa).

12–15 (KISG) contacts ATP. Residue Gly55 coordinates UMP. Residues Gly56 and Arg60 each contribute to the ATP site. UMP is bound by residues Asp76 and 137–144 (AGAPYLTT). Residues Thr164, Tyr171, and Asp174 each coordinate ATP.

The protein belongs to the UMP kinase family. As to quaternary structure, homohexamer.

The protein resides in the cytoplasm. It catalyses the reaction UMP + ATP = UDP + ADP. It functions in the pathway pyrimidine metabolism; CTP biosynthesis via de novo pathway; UDP from UMP (UMPK route): step 1/1. Inhibited by UTP. Catalyzes the reversible phosphorylation of UMP to UDP. The protein is Uridylate kinase of Chlamydia trachomatis serovar D (strain ATCC VR-885 / DSM 19411 / UW-3/Cx).